The sequence spans 939 residues: MSVFNKLMRAGEGKILRKLHRIADQVSSIEEDFVNLSDAELRALTDEYKERYADGESLDDLLPEAFATVREAAKRVLGQRHYDVQMMGGAALHLGYVAEMKTGEGKTLVGTLPAYLNALSGKGVHLITVNDYLAERDSELMGRVHKFLGLSVGCIVANMTPAQRREQYGCDITYGTNNEFGFDYLRDNMAWSKDELVQRGHNFAVVDEVDSILVDEARTPLIISGPADQATKWYGDFAKLVTRLTKGEAGNQLKGIEETGDYEVDEKKRTVAIHEAGVAKVEDWLGIDNLYESVNTPLVGYLNNAIKAKELFKKDKDYVVIDGEVMIVDEHTGRILAGRRYNEGMHQAIEAKEGVDIKDENQTLATITLQNFFRLYDKLSGMTGTAMTEAAEFHQIYKLGVVPIPTNRPMVRADQSDLIYRTEVAKFAAVVDDIAEKHEKGQPILVGTTSVEKSEYLSQQLSKRGVQHEVLNAKQHDREATIVAQAGRKGAVTVATNMAGRGTDIKLGGNPDDLAEAELRQRGLDPVENVEEWAAALPAALETAEQAVKAEFEEVKDLGGLYVLGTERHESRRIDNQLRGRSGRQGDPGESRFYLSLGDDLMRLFKAQMVERVMSMANVPDDVPIENKMVTRAIASAQSQVEQQNFETRKNVLKYDEVLNRQREVIYGERRRVLEGEDLQEQIRHFMDDTIDDYIRQETAEGFAEEWDLDRLWGAFKQLYPVKVTVDELEEAAGDLAGVTAEFIAESVKNDIHEQYEERENTLGSDIMRELERRVVLSVLDRKWREHLYEMDYLQEGIGLRAMAQKDPLVEYQREGFDMFNAMMEGIKEESVGYLFNLEVQVEQQVEEVPVQDGAERPSLEKEGATAAPQIRAKGLEAPQRPDRLHFSAPTVDGEGGVVEGDFANDEATGDTRSGSADGMTRAERRKAQKGGGGRRRKK.

ATP contacts are provided by residues Q85, 103 to 107, and D504; that span reads GEGKT. The interval 850–939 is disordered; sequence PVQDGAERPS…KGGGGRRRKK (90 aa). Residues 854-864 show a composition bias toward basic and acidic residues; the sequence is GAERPSLEKEG. Basic residues predominate over residues 924–939; that stretch reads ERRKAQKGGGGRRRKK.

The protein belongs to the SecA family. Monomer and homodimer. Part of the essential Sec protein translocation apparatus which comprises SecA, SecYEG and auxiliary proteins SecDF. Other proteins may also be involved.

Its subcellular location is the cell membrane. The protein localises to the cytoplasm. The catalysed reaction is ATP + H2O + cellular proteinSide 1 = ADP + phosphate + cellular proteinSide 2.. Its function is as follows. Part of the Sec protein translocase complex. Interacts with the SecYEG preprotein conducting channel. Has a central role in coupling the hydrolysis of ATP to the transfer of proteins into and across the cell membrane, serving as an ATP-driven molecular motor driving the stepwise translocation of polypeptide chains across the membrane. The protein is Protein translocase subunit SecA of Streptomyces griseus subsp. griseus (strain JCM 4626 / CBS 651.72 / NBRC 13350 / KCC S-0626 / ISP 5235).